A 492-amino-acid polypeptide reads, in one-letter code: Ribulose bisphosphate carboxylase large chain (492 aa).

Residues Asn131 and Thr181 each contribute to the substrate site. The Proton acceptor role is filled by Lys183. Lys185 contacts substrate. Mg(2+)-binding residues include Lys209, Asp211, and Glu212. Lys209 carries the N6-carboxylysine modification. Residue His301 is the Proton acceptor of the active site. Substrate-binding residues include Arg302, His334, and Ser386.

It belongs to the RuBisCO large chain family. Type I subfamily. As to quaternary structure, heterohexadecamer of 8 large chains and 8 small chains. Requires Mg(2+) as cofactor.

It carries out the reaction 2 (2R)-3-phosphoglycerate + 2 H(+) = D-ribulose 1,5-bisphosphate + CO2 + H2O. The catalysed reaction is D-ribulose 1,5-bisphosphate + O2 = 2-phosphoglycolate + (2R)-3-phosphoglycerate + 2 H(+). In terms of biological role, ruBisCO catalyzes two reactions: the carboxylation of D-ribulose 1,5-bisphosphate, the primary event in carbon dioxide fixation, as well as the oxidative fragmentation of the pentose substrate. Both reactions occur simultaneously and in competition at the same active site. This chain is Ribulose bisphosphate carboxylase large chain, found in Nitrosococcus oceani (strain ATCC 19707 / BCRC 17464 / JCM 30415 / NCIMB 11848 / C-107).